We begin with the raw amino-acid sequence, 179 residues long: O-acetyl-ADP-ribose deacetylase (179 aa).

Residues 1-175 (MTSRLQVIQG…LYARLLTQQG (175 aa)) form the Macro domain. Substrate is bound by residues 11-12 (DI), Asn25, 33-35 (GVD), and 122-126 (STGVY). Asp35 serves as the catalytic Proton acceptor.

It belongs to the MacroD-type family. YmdB subfamily. Homodimer. Interacts with RNase III.

The catalysed reaction is 3''-O-acetyl-ADP-D-ribose + H2O = ADP-D-ribose + acetate + H(+). It carries out the reaction 2''-O-acetyl-ADP-D-ribose + H2O = ADP-D-ribose + acetate + H(+). Its function is as follows. Deacetylates O-acetyl-ADP ribose to yield ADP-ribose and free acetate. Down-regulates ribonuclease 3 (RNase III) activity. Acts by interacting directly with the region of the ribonuclease that is required for dimerization/activation. The sequence is that of O-acetyl-ADP-ribose deacetylase from Salmonella gallinarum (strain 287/91 / NCTC 13346).